Here is a 159-residue protein sequence, read N- to C-terminus: D-aminoacyl-tRNA deacylase (159 aa).

The short motif at 146–147 is the Gly-cisPro motif, important for rejection of L-amino acids element; it reads GP.

The protein belongs to the DTD family. As to quaternary structure, homodimer.

It is found in the cytoplasm. It carries out the reaction glycyl-tRNA(Ala) + H2O = tRNA(Ala) + glycine + H(+). The catalysed reaction is a D-aminoacyl-tRNA + H2O = a tRNA + a D-alpha-amino acid + H(+). Functionally, an aminoacyl-tRNA editing enzyme that deacylates mischarged D-aminoacyl-tRNAs. Also deacylates mischarged glycyl-tRNA(Ala), protecting cells against glycine mischarging by AlaRS. Acts via tRNA-based rather than protein-based catalysis; rejects L-amino acids rather than detecting D-amino acids in the active site. By recycling D-aminoacyl-tRNA to D-amino acids and free tRNA molecules, this enzyme counteracts the toxicity associated with the formation of D-aminoacyl-tRNA entities in vivo and helps enforce protein L-homochirality. This chain is D-aminoacyl-tRNA deacylase, found in Bifidobacterium animalis subsp. lactis (strain AD011).